A 338-amino-acid polypeptide reads, in one-letter code: Ketol-acid reductoisomerase (NADP(+)) (338 aa).

The 181-residue stretch at 1–181 (MKVYYDKDAD…GGTKGGVIET (181 aa)) folds into the KARI N-terminal Rossmann domain. Residues 24–27 (YGSQ), Arg-47, and Ser-52 contribute to the NADP(+) site. The active site involves His-107. Gly-133 is an NADP(+) binding site. Positions 182 to 327 (NFREETETDL…SQLRAMMPWI (146 aa)) constitute a KARI C-terminal knotted domain. Mg(2+)-binding residues include Asp-190, Glu-194, Glu-226, and Glu-230. Residue Ser-251 coordinates substrate.

This sequence belongs to the ketol-acid reductoisomerase family. Mg(2+) serves as cofactor.

It catalyses the reaction (2R)-2,3-dihydroxy-3-methylbutanoate + NADP(+) = (2S)-2-acetolactate + NADPH + H(+). The enzyme catalyses (2R,3R)-2,3-dihydroxy-3-methylpentanoate + NADP(+) = (S)-2-ethyl-2-hydroxy-3-oxobutanoate + NADPH + H(+). Its pathway is amino-acid biosynthesis; L-isoleucine biosynthesis; L-isoleucine from 2-oxobutanoate: step 2/4. It functions in the pathway amino-acid biosynthesis; L-valine biosynthesis; L-valine from pyruvate: step 2/4. Its function is as follows. Involved in the biosynthesis of branched-chain amino acids (BCAA). Catalyzes an alkyl-migration followed by a ketol-acid reduction of (S)-2-acetolactate (S2AL) to yield (R)-2,3-dihydroxy-isovalerate. In the isomerase reaction, S2AL is rearranged via a Mg-dependent methyl migration to produce 3-hydroxy-3-methyl-2-ketobutyrate (HMKB). In the reductase reaction, this 2-ketoacid undergoes a metal-dependent reduction by NADPH to yield (R)-2,3-dihydroxy-isovalerate. The sequence is that of Ketol-acid reductoisomerase (NADP(+)) from Methylobacillus flagellatus (strain ATCC 51484 / DSM 6875 / VKM B-1610 / KT).